Here is a 297-residue protein sequence, read N- to C-terminus: uncharacterized protein (297 aa).

The segment at 136–174 (FSETNDDSTDEEIDTPINDDDDDDKNNDADNNDINEDNK) is disordered. Acidic residues predominate over residues 139-170 (TNDDSTDEEIDTPINDDDDDDKNNDADNNDIN).

To S.pombe SpBC725.03.

This is an uncharacterized protein from Saccharomyces cerevisiae (strain ATCC 204508 / S288c) (Baker's yeast).